Here is a 485-residue protein sequence, read N- to C-terminus: Inosine-5'-monophosphate dehydrogenase (485 aa).

2 CBS domains span residues 95–154 and 155–215; these read VITN…IDDV and MTKE…AKDS. NAD(+)-binding positions include D249 and 299–301; that span reads GIG. K(+) is bound by residues G301 and G303. IMP is bound at residue S304. A K(+)-binding site is contributed by C306. C306 serves as the catalytic Thioimidate intermediate. Residues 339 to 341, 362 to 363, and 386 to 390 contribute to the IMP site; these read DGG, GS, and YRGMG. R402 functions as the Proton acceptor in the catalytic mechanism. Residue E414 coordinates IMP. Residues E468, S469, and H470 each coordinate K(+).

Belongs to the IMPDH/GMPR family. Homotetramer. K(+) is required as a cofactor.

The enzyme catalyses IMP + NAD(+) + H2O = XMP + NADH + H(+). Its pathway is purine metabolism; XMP biosynthesis via de novo pathway; XMP from IMP: step 1/1. With respect to regulation, mycophenolic acid (MPA) is a non-competitive inhibitor that prevents formation of the closed enzyme conformation by binding to the same site as the amobile flap. In contrast, mizoribine monophosphate (MZP) is a competitive inhibitor that induces the closed conformation. MPA is a potent inhibitor of mammalian IMPDHs but a poor inhibitor of the bacterial enzymes. MZP is a more potent inhibitor of bacterial IMPDH. Functionally, catalyzes the conversion of inosine 5'-phosphate (IMP) to xanthosine 5'-phosphate (XMP), the first committed and rate-limiting step in the de novo synthesis of guanine nucleotides, and therefore plays an important role in the regulation of cell growth. The protein is Inosine-5'-monophosphate dehydrogenase of Halalkalibacterium halodurans (strain ATCC BAA-125 / DSM 18197 / FERM 7344 / JCM 9153 / C-125) (Bacillus halodurans).